We begin with the raw amino-acid sequence, 160 residues long: Cytochrome c-type biogenesis protein CcmE (160 aa).

The Cytoplasmic segment spans residues 1–7; it reads MTRKQRR. A helical; Signal-anchor for type II membrane protein transmembrane segment spans residues 8–28; it reads ATFIAVSLGILALAVGLVLYA. Topologically, residues 29-160 are periplasmic; it reads MRDSIVYFYS…SETYGQGSYP (132 aa). Heme contacts are provided by H122 and Y126. Positions 141 to 160 are disordered; it reads WQGEGAEAPHSETYGQGSYP.

It belongs to the CcmE/CycJ family.

The protein resides in the cell inner membrane. Heme chaperone required for the biogenesis of c-type cytochromes. Transiently binds heme delivered by CcmC and transfers the heme to apo-cytochromes in a process facilitated by CcmF and CcmH. This Parvibaculum lavamentivorans (strain DS-1 / DSM 13023 / NCIMB 13966) protein is Cytochrome c-type biogenesis protein CcmE.